The primary structure comprises 906 residues: Probable helicase HelY (906 aa).

A Helicase ATP-binding domain is found at 26–184 (CSALERGHGV…WIQTVRGDTT (159 aa)). 39 to 46 (APTGAGKT) contacts ATP. The short motif at 132–135 (DEVH) is the DEVH box element. Residues 259–463 (GRPEVIAKLD…SYNMTINLVH (205 aa)) enclose the Helicase C-terminal domain.

Belongs to the helicase family. SKI2 subfamily.

In Mycobacterium tuberculosis (strain CDC 1551 / Oshkosh), this protein is Probable helicase HelY (helY).